The chain runs to 320 residues: Ribose-phosphate pyrophosphokinase 1 (320 aa).

ATP is bound by residues 39–41 (DGE) and 98–99 (RQ). Residues His-132 and Asp-173 each contribute to the Mg(2+) site. The active site involves Lys-196. D-ribose 5-phosphate-binding positions include Arg-198, Asp-224, and 228 to 232 (DTAGT).

This sequence belongs to the ribose-phosphate pyrophosphokinase family. Class I subfamily. In terms of assembly, homohexamer. The cofactor is Mg(2+).

The protein localises to the cytoplasm. The catalysed reaction is D-ribose 5-phosphate + ATP = 5-phospho-alpha-D-ribose 1-diphosphate + AMP + H(+). The protein operates within metabolic intermediate biosynthesis; 5-phospho-alpha-D-ribose 1-diphosphate biosynthesis; 5-phospho-alpha-D-ribose 1-diphosphate from D-ribose 5-phosphate (route I): step 1/1. Its function is as follows. Involved in the biosynthesis of the central metabolite phospho-alpha-D-ribosyl-1-pyrophosphate (PRPP) via the transfer of pyrophosphoryl group from ATP to 1-hydroxyl of ribose-5-phosphate (Rib-5-P). The sequence is that of Ribose-phosphate pyrophosphokinase 1 from Streptococcus pyogenes serotype M1.